The following is a 373-amino-acid chain: Peptide chain release factor 1-like, mitochondrial (373 aa).

The N-terminal 13 residues, 1 to 13, are a transit peptide targeting the mitochondrion; sequence MRSGFLRSARRLW. A coiled-coil region spans residues 56-111; the sequence is QLAAAARLLNEKERELRDTESLLHDENEDLKKLAESEIALCQKEIAELKHRIISLL. Residues 229–293 form a GGQ domain region; it reads PKDLRIDTKR…LRARLYSMRL (65 aa). The short motif at 243–245 is the GGQ element; sequence GGQ. Position 245 is an N5-methylglutamine (Gln245).

It belongs to the prokaryotic/mitochondrial release factor family. Post-translationally, methylation of glutamine in the GGQ triplet by HEMK1 is conserved from bacteria to mammals.

The protein resides in the mitochondrion. Its function is as follows. Mitochondrial peptide chain release factor that directs the termination of translation in response to the peptide chain termination codons UAA and UAG. The protein is Peptide chain release factor 1-like, mitochondrial (Mtrf1l) of Rattus norvegicus (Rat).